A 246-amino-acid polypeptide reads, in one-letter code: Probable fimbrial chaperone YadV (246 aa).

A signal peptide spans 1–25; that stretch reads MFFNTKHTTALCFVTCMAFSSSSIA.

Belongs to the periplasmic pilus chaperone family.

Its subcellular location is the periplasm. Its function is as follows. Part of the yadCKLM-htrE-yadVN fimbrial operon. Could contribute to adhesion to various surfaces in specific environmental niches. This is Probable fimbrial chaperone YadV (yadV) from Escherichia coli (strain K12).